The primary structure comprises 271 residues: Tropinone reductase homolog At2g29360 (271 aa).

22-46 is an NADP(+) binding site; sequence LVTGGSKGIGEAVVEELATLGARIH. Ser155 provides a ligand contact to substrate. The active-site Proton acceptor is the Tyr168.

It belongs to the short-chain dehydrogenases/reductases (SDR) family. SDR65C subfamily.

Functionally, oxidoreductase active on cyclic ketones, but not on tropinone or nortropinone. In Arabidopsis thaliana (Mouse-ear cress), this protein is Tropinone reductase homolog At2g29360.